A 358-amino-acid polypeptide reads, in one-letter code: Hydroxyproline O-arabinosyltransferase 3 (358 aa).

The chain crosses the membrane as a helical; Signal-anchor span at residues leucine 8–valine 28.

Ubiquitous.

The protein localises to the golgi apparatus. The protein resides in the cis-Golgi network membrane. It carries out the reaction trans-4-hydroxy-L-prolyl-[protein] + UDP-beta-L-arabinofuranose = O-(beta-L-arabinofuranosyl)-trans-4-hydroxy-L-prolyl-[protein] + UDP + H(+). Glycosyltransferase involved in the O-arabinosylation of several proteins including extensins and small signaling peptides. Catalyzes the transfer of the initial L-arabinose to the hydroxyl group of Hyp residues. Contributes redundantly with HPAT1 and HPAT2 to arabinosylation of EXT3, but main contributor to arabinosylation of CLE peptides. The protein is Hydroxyproline O-arabinosyltransferase 3 of Arabidopsis thaliana (Mouse-ear cress).